Here is a 206-residue protein sequence, read N- to C-terminus: Regulatory protein CysR (206 aa).

Residues 120–196 (RRAEAKLASL…DRALIVRYPE (77 aa)) enclose the HTH crp-type domain. The segment at residues 156-175 (HQVIAELSGSTRVTTTRLLG) is a DNA-binding region (H-T-H motif).

Its subcellular location is the cytoplasm. Functionally, probably regulates the expression of genes from the sulfate permease complex. This Synechococcus elongatus (strain ATCC 33912 / PCC 7942 / FACHB-805) (Anacystis nidulans R2) protein is Regulatory protein CysR (cysR).